Reading from the N-terminus, the 367-residue chain is Histidinol-phosphate aminotransferase (367 aa).

Position 221 is an N6-(pyridoxal phosphate)lysine (Lys-221).

The protein belongs to the class-II pyridoxal-phosphate-dependent aminotransferase family. Histidinol-phosphate aminotransferase subfamily. Homodimer. The cofactor is pyridoxal 5'-phosphate.

It carries out the reaction L-histidinol phosphate + 2-oxoglutarate = 3-(imidazol-4-yl)-2-oxopropyl phosphate + L-glutamate. It participates in amino-acid biosynthesis; L-histidine biosynthesis; L-histidine from 5-phospho-alpha-D-ribose 1-diphosphate: step 7/9. The sequence is that of Histidinol-phosphate aminotransferase from Paracoccus denitrificans (strain Pd 1222).